An 862-amino-acid chain; its full sequence is DNA mismatch repair protein MutS (862 aa).

608–615 (GPNMAGKS) is a binding site for ATP.

It belongs to the DNA mismatch repair MutS family.

This protein is involved in the repair of mismatches in DNA. It is possible that it carries out the mismatch recognition step. This protein has a weak ATPase activity. This is DNA mismatch repair protein MutS from Bacteroides thetaiotaomicron (strain ATCC 29148 / DSM 2079 / JCM 5827 / CCUG 10774 / NCTC 10582 / VPI-5482 / E50).